The following is a 975-amino-acid chain: Glycine dehydrogenase (decarboxylating) (975 aa).

Residue Lys723 is modified to N6-(pyridoxal phosphate)lysine.

Belongs to the GcvP family. The glycine cleavage system is composed of four proteins: P, T, L and H. Requires pyridoxal 5'-phosphate as cofactor.

The enzyme catalyses N(6)-[(R)-lipoyl]-L-lysyl-[glycine-cleavage complex H protein] + glycine + H(+) = N(6)-[(R)-S(8)-aminomethyldihydrolipoyl]-L-lysyl-[glycine-cleavage complex H protein] + CO2. The glycine cleavage system catalyzes the degradation of glycine. The P protein binds the alpha-amino group of glycine through its pyridoxal phosphate cofactor; CO(2) is released and the remaining methylamine moiety is then transferred to the lipoamide cofactor of the H protein. The sequence is that of Glycine dehydrogenase (decarboxylating) from Burkholderia orbicola (strain MC0-3).